Reading from the N-terminus, the 153-residue chain is RNA-binding protein OPG065 (153 aa).

The 33-residue stretch at 1–33 (MEKREVNKALYDLQRSAMVYSSNDTPPRWSTTM) folds into the Z-binding domain. Residues 22 to 34 (SNDTPPRWSTTMD) are compositionally biased toward polar residues. Residues 22–44 (SNDTPPRWSTTMDADTRPTDSDA) form a disordered region. The DRBM domain occupies 80-147 (NPVTVINEYC…AKLAVDKLLS (68 aa)).

Belongs to the orthopoxvirus OPG065 family. As to quaternary structure, interacts with host G1P2/ISG15. Interacts with host EIF2AK2/PKR. Interacts with host ZBP1.

In terms of biological role, RNA-binding protein that plays a role in the inhibition of multiple cellular antiviral responses activated by double-stranded RNA (dsRNA), such as inhibition of PKR activation, necroptosis, and IFN-mediated antiviral activities. Recognizes and binds Z-RNA structures via its Z-binding domain and dsRNA via its DRBM domain: RNA-binding activity is required to escape host ZBP1-dependent necroptosis. Mechanistically, the Z-binding domain binds Z-RNAs that are produced during vaccinia virus infection, thereby competing with Z-RNA detection by host ZBP1, suppressing ZBP1-dependent necroptosis. Acts as a key inhibitor of the interferon response by blocking the phosphorylation and subsequent activation of IRF3 and IRF7 kinases that are required for interferon-alpha gene expression. Inhibits NF-kappa-B activation and the ubiquitin-like protein ISG15, which is an early antiviral protein. The binding with host ISG15 subsequently blocks host ISGylation. In Monkeypox virus, this protein is RNA-binding protein OPG065 (OPG065).